Here is a 287-residue protein sequence, read N- to C-terminus: mRNA-capping enzyme regulatory subunit OPG124 (287 aa).

Belongs to the orthopoxvirus mRNA-capping enzyme regulatory subunit family. Interacts with the late transcription elongation factor VLTF-4/OPG110. Interacts with the late transcription factors VLTF-1.

The protein resides in the virion. Its function is as follows. Acts with RNA polymerase to initiate transcription from late gene promoters. The chain is mRNA-capping enzyme regulatory subunit OPG124 (OPG124) from Monkeypox virus.